The primary structure comprises 433 residues: D-amino acid dehydrogenase (433 aa).

3 to 17 is a binding site for FAD; that stretch reads VLVLGSGVIGTASAY.

The protein belongs to the DadA oxidoreductase family. FAD serves as cofactor.

The enzyme catalyses a D-alpha-amino acid + A + H2O = a 2-oxocarboxylate + AH2 + NH4(+). It participates in amino-acid degradation; D-alanine degradation; NH(3) and pyruvate from D-alanine: step 1/1. Oxidative deamination of D-amino acids. This is D-amino acid dehydrogenase from Pseudomonas putida (strain W619).